A 101-amino-acid chain; its full sequence is Small ribosomal subunit protein uS14 (101 aa).

The protein belongs to the universal ribosomal protein uS14 family. As to quaternary structure, part of the 30S ribosomal subunit. Contacts proteins S3 and S10.

Binds 16S rRNA, required for the assembly of 30S particles and may also be responsible for determining the conformation of the 16S rRNA at the A site. The chain is Small ribosomal subunit protein uS14 from Colwellia psychrerythraea (strain 34H / ATCC BAA-681) (Vibrio psychroerythus).